The chain runs to 223 residues: Cell division protein SepF (223 aa).

The segment at 19–81 is disordered; sequence YDDEYYDDRG…YPPPGGYRGG (63 aa). The span at 36-69 shows a compositional bias: basic and acidic residues; it reads PRFEDDYGRYEGRDFEDPRRDPRAGMRADLRGEP.

It belongs to the SepF family. In terms of assembly, homodimer. Interacts with FtsZ.

Its subcellular location is the cytoplasm. Functionally, cell division protein that is part of the divisome complex and is recruited early to the Z-ring. Probably stimulates Z-ring formation, perhaps through the cross-linking of FtsZ protofilaments. Its function overlaps with FtsA. The protein is Cell division protein SepF of Mycobacterium ulcerans (strain Agy99).